Consider the following 252-residue polypeptide: tRNA (guanine-N(1)-)-methyltransferase (252 aa).

S-adenosyl-L-methionine-binding positions include G113 and 133-138; that span reads IGDYVL.

It belongs to the RNA methyltransferase TrmD family. Homodimer.

The protein localises to the cytoplasm. The catalysed reaction is guanosine(37) in tRNA + S-adenosyl-L-methionine = N(1)-methylguanosine(37) in tRNA + S-adenosyl-L-homocysteine + H(+). In terms of biological role, specifically methylates guanosine-37 in various tRNAs. The sequence is that of tRNA (guanine-N(1)-)-methyltransferase from Nitrosococcus oceani (strain ATCC 19707 / BCRC 17464 / JCM 30415 / NCIMB 11848 / C-107).